The following is a 184-amino-acid chain: MINDLKKDSEQRMLKTLESLEQGFAKVRTGRAHPSILNGVMVPYYGSDVPLNQVANVGVEDSRTLIVQPFERTMVAAIDKAIRESDLGLNPITADSIRVPLPALTEETRRDMQKIARSEAENAKVAIRNIRRDVLGDIKALLKEKEISEDDERRAGDDIQKITDKYVAEVDKRLAAKEAELMKV.

It belongs to the RRF family.

Its subcellular location is the cytoplasm. Its function is as follows. Responsible for the release of ribosomes from messenger RNA at the termination of protein biosynthesis. May increase the efficiency of translation by recycling ribosomes from one round of translation to another. This is Ribosome-recycling factor from Acinetobacter baumannii (strain AB307-0294).